A 502-amino-acid chain; its full sequence is ATP synthase subunit alpha (502 aa).

169–176 (GDRQTGKT) provides a ligand contact to ATP.

This sequence belongs to the ATPase alpha/beta chains family. In terms of assembly, F-type ATPases have 2 components, CF(1) - the catalytic core - and CF(0) - the membrane proton channel. CF(1) has five subunits: alpha(3), beta(3), gamma(1), delta(1), epsilon(1). CF(0) has three main subunits: a(1), b(2) and c(9-12). The alpha and beta chains form an alternating ring which encloses part of the gamma chain. CF(1) is attached to CF(0) by a central stalk formed by the gamma and epsilon chains, while a peripheral stalk is formed by the delta and b chains.

Its subcellular location is the cell inner membrane. The enzyme catalyses ATP + H2O + 4 H(+)(in) = ADP + phosphate + 5 H(+)(out). In terms of biological role, produces ATP from ADP in the presence of a proton gradient across the membrane. The alpha chain is a regulatory subunit. The sequence is that of ATP synthase subunit alpha from Nitratidesulfovibrio vulgaris (strain ATCC 29579 / DSM 644 / CCUG 34227 / NCIMB 8303 / VKM B-1760 / Hildenborough) (Desulfovibrio vulgaris).